The following is a 498-amino-acid chain: Neoxanthin synthase, chloroplastic (498 aa).

The transit peptide at 1 to 42 directs the protein to the chloroplast; the sequence is METLLKPFPSLLLSSPTPYRSIVQQNPSFLSPTTKKKSRKCL.

The protein belongs to the lycopene cyclase family. As to expression, expressed exclusively in chromoplast-containing tissues of flowers and fruits. Expressed in preanthesis flowers.

The protein resides in the plastid. It is found in the chloroplast. It carries out the reaction all-trans-violaxanthin = all-trans-neoxanthin. It catalyses the reaction a carotenoid psi-end group = a carotenoid beta-end derivative. The protein operates within carotenoid biosynthesis; neoxanthin biosynthesis. It functions in the pathway carotenoid biosynthesis; beta-carotene biosynthesis. Functionally, involved in the synthesis of neoxanthin, the last product of carotenoid synthesis and a precursor of abscisic acid. Involved in the beta-carotene biosynthesis. This chain is Neoxanthin synthase, chloroplastic, found in Solanum lycopersicum (Tomato).